An 85-amino-acid chain; its full sequence is Putative membrane protein insertion efficiency factor (85 aa).

The protein belongs to the UPF0161 family.

The protein resides in the cell inner membrane. In terms of biological role, could be involved in insertion of integral membrane proteins into the membrane. This chain is Putative membrane protein insertion efficiency factor, found in Vibrio atlanticus (strain LGP32) (Vibrio splendidus (strain Mel32)).